Reading from the N-terminus, the 84-residue chain is CLAVATA3/ESR (CLE)-related protein 13 (84 aa).

Positions 1–29 (MGRYTTDQVQVYVLVIVLCTFFSTLQARS) are cleaved as a signal peptide. The segment at 57–84 (KQVRDISGDRLSPAGPDPQHNGRSPPRK) is disordered. Residues P69 and P72 each carry the hydroxyproline modification. P72 is a glycosylation site (O-linked (Ara...) hydroxyproline).

This sequence belongs to the CLV3/ESR signal peptide family. The O-glycosylation (arabinosylation) of the hydroxyproline Pro-72 enhances binding affinity of the CLE13p peptide for its receptor. As to expression, expressed in young nodules throughout the central tissue. Expressed in the apical region of elongated nodules, corresponding to the meristematic and early infection zones.

It is found in the secreted. Its subcellular location is the extracellular space. In terms of biological role, signaling peptide involved in the regulation of nodulation. Moves from root to shoot to function with the receptor kinase SUNN, in a signaling pathway that plays roles during cellular differentiation, both at the onset of nodulation, and later during nodule meristem development and subsequent homeostasis. Interacts with SUNN signaling to control nodule numbers. SUNN is involved in the autoregulation of nodulation (AON), a long distance systemic signaling from root to shoot and back again, which allows legumes to limit the number of root nodules formed based on available nitrogen and previous rhizobial colonization. This chain is CLAVATA3/ESR (CLE)-related protein 13, found in Medicago truncatula (Barrel medic).